A 591-amino-acid polypeptide reads, in one-letter code: MKKISLPKIGIRPVIDGRRMGVRESLEEQTMNMAKATAALLTEKLRHACGAAVECVISDTCIAGMAEAAACEEKFSSQNVGLTITVTPCWCYGSETIDMDPTRPKAIWGFNGTERPGAVYLAAALAAHSQKGIPAFSIYGHDVQDADDTSIPADVEEKLLRFARAGLAVASMKGKSYLSLGGVSMGIAGSIVDHNFFESWLGMKVQAVDMTELRRRIDQQIYDEAELEMALAWADKNFRYGEDENNKQYQRNAEQSRAVLRESLLMAMCIRDMMQGNSKLADIGRVEESLGYNAIAAGFQGQRHWTDQYPNGDTAEAILNSSFDWNGVREPFVVATENDSLNGVAMLMGHQLTGTAQVFADVRTYWSPEAIERVTGHKLDGLAEHGIIHLINSGSAALDGSCKQRDSEGNPTMKPHWEISQQEADACLAATEWCPAIHEYFRGGGYSSRFLTEGGVPFTMTRVNIIKGLGPVLQIAEGWSVELPKDVHDILNKRTNSTWPTTWFAPRLTGKGPFTDVYSVMANWGANHGVLTIGHVGADFITLASMLRIPVCMHNVEETKVYRPSAWAAHGMDIEGQDYRACQNYGPLYKR.

Catalysis depends on proton acceptor residues Glu-337 and Asp-361. Mn(2+) is bound by residues Glu-337, Asp-361, and His-528.

Belongs to the L-fucose isomerase family. In terms of assembly, homohexamer. Mn(2+) is required as a cofactor.

The protein localises to the cytoplasm. The catalysed reaction is L-fucose = L-fuculose. The protein operates within carbohydrate degradation; L-fucose degradation; L-lactaldehyde and glycerone phosphate from L-fucose: step 1/3. Functionally, converts the aldose L-fucose into the corresponding ketose L-fuculose. The protein is L-fucose isomerase of Escherichia coli (strain ATCC 8739 / DSM 1576 / NBRC 3972 / NCIMB 8545 / WDCM 00012 / Crooks).